A 332-amino-acid chain; its full sequence is Spherulin-4 (332 aa).

The first 22 residues, 1 to 22 (MNIKIVVLVIFAILLGSALAWH), serve as a signal peptide directing secretion. The segment at 26 to 60 (HHNPTKAPTEAPHRGGGGGGGHNTPAPTQPPRQNT) is disordered.

The protein is Spherulin-4 of Physarum polycephalum (Slime mold).